Consider the following 316-residue polypeptide: tRNA dimethylallyltransferase (316 aa).

19–26 (GPTASGKT) lines the ATP pocket. A substrate-binding site is contributed by 21–26 (TASGKT). 3 interaction with substrate tRNA regions span residues 44–47 (DSAL), 168–172 (QRITR), and 249–254 (RCVGYR).

This sequence belongs to the IPP transferase family. As to quaternary structure, monomer. Requires Mg(2+) as cofactor.

The catalysed reaction is adenosine(37) in tRNA + dimethylallyl diphosphate = N(6)-dimethylallyladenosine(37) in tRNA + diphosphate. Its function is as follows. Catalyzes the transfer of a dimethylallyl group onto the adenine at position 37 in tRNAs that read codons beginning with uridine, leading to the formation of N6-(dimethylallyl)adenosine (i(6)A). This chain is tRNA dimethylallyltransferase, found in Colwellia psychrerythraea (strain 34H / ATCC BAA-681) (Vibrio psychroerythus).